A 367-amino-acid chain; its full sequence is Undecaprenyl-phosphate alpha-N-acetylglucosaminyl 1-phosphate transferase (367 aa).

The next 10 membrane-spanning stretches (helical) occupy residues 3–23 (LLTV…FLFF), 46–66 (LIPL…FGIV), 69–89 (YIPH…IGAL), 132–152 (VLGP…INAF), 158–178 (IDGL…MILW), 187–207 (IWCF…LGIL), 213–233 (VFMG…ILLE), 242–262 (ISPV…VAIM), 294–314 (AFVL…LAEY), and 318–338 (VPEW…GYCI).

Belongs to the glycosyltransferase 4 family. WecA subfamily. Requires Mg(2+) as cofactor. Mn(2+) serves as cofactor.

It is found in the cell inner membrane. It carries out the reaction di-trans,octa-cis-undecaprenyl phosphate + UDP-N-acetyl-alpha-D-glucosamine = N-acetyl-alpha-D-glucosaminyl-di-trans,octa-cis-undecaprenyl diphosphate + UMP. It functions in the pathway bacterial outer membrane biogenesis; LPS O-antigen biosynthesis. Its pathway is bacterial outer membrane biogenesis; enterobacterial common antigen biosynthesis. In terms of biological role, catalyzes the transfer of the GlcNAc-1-phosphate moiety from UDP-GlcNAc onto the carrier lipid undecaprenyl phosphate (C55-P), yielding GlcNAc-pyrophosphoryl-undecaprenyl (GlcNAc-PP-C55). The polypeptide is Undecaprenyl-phosphate alpha-N-acetylglucosaminyl 1-phosphate transferase (Escherichia coli O6:H1 (strain CFT073 / ATCC 700928 / UPEC)).